A 102-amino-acid polypeptide reads, in one-letter code: MYAVVRTGGKQYKVSEGDFLKVEKLEGAVGDTVNLSEVLMVGGDKVAIGTPLVPSASVVGKIVEQGKDKKILVFKSKRRKDSRKLNGHRQLRTILKIEKINA.

The protein belongs to the bacterial ribosomal protein bL21 family. Part of the 50S ribosomal subunit. Contacts protein L20.

This protein binds to 23S rRNA in the presence of protein L20. The sequence is that of Large ribosomal subunit protein bL21 from Geotalea daltonii (strain DSM 22248 / JCM 15807 / FRC-32) (Geobacter daltonii).